The sequence spans 641 residues: Calpain-6 (641 aa).

Residues 26–343 (LFCDPTFLPE…FHKLNVCRNV (318 aa)) enclose the Calpain catalytic domain. Residues 344–495 (NNPIFGRKEL…IFSEVPVQLR (152 aa)) form a domain III region. Residues 498-621 (TLDMPKMSCW…YLRKKGGPTA (124 aa)) form the C2 domain.

This sequence belongs to the peptidase C2 family. In terms of assembly, interacts (via domain III) with microtubules. Interacts (via domain II) with ARHGEF2 (via the N-terminal zinc finger). In terms of tissue distribution, expressed only in placenta.

It localises to the cytoplasm. Its subcellular location is the perinuclear region. The protein resides in the cytoskeleton. The protein localises to the spindle. Microtubule-stabilizing protein that may be involved in the regulation of microtubule dynamics and cytoskeletal organization. May act as a regulator of RAC1 activity through interaction with ARHGEF2 to control lamellipodial formation and cell mobility. Does not seem to have protease activity as it has lost the active site residues. The sequence is that of Calpain-6 (CAPN6) from Homo sapiens (Human).